We begin with the raw amino-acid sequence, 69 residues long: Large ribosomal subunit protein bL31 (69 aa).

Zn(2+)-binding residues include Cys16, Cys18, Cys38, and Cys41.

Belongs to the bacterial ribosomal protein bL31 family. Type A subfamily. In terms of assembly, part of the 50S ribosomal subunit. The cofactor is Zn(2+).

Binds the 23S rRNA. The sequence is that of Large ribosomal subunit protein bL31 from Thermobifida fusca (strain YX).